A 259-amino-acid chain; its full sequence is Virulence plasmid ParA family protein pGP5-D (259 aa).

9 to 16 contacts ATP; the sequence is FKGGTGKT.

Belongs to the ParA family.

In Chlamydia psittaci (Chlamydophila psittaci), this protein is Virulence plasmid ParA family protein pGP5-D.